Consider the following 104-residue polypeptide: Translation initiation factor 1A (104 aa).

The span at 1-14 (MRGQQAPPQQPTRV) shows a compositional bias: low complexity. A disordered region spans residues 1–20 (MRGQQAPPQQPTRVRTPREN). The S1-like domain occupies 12 to 87 (TRVRTPRENE…EKCDVIWRYT (76 aa)).

The protein belongs to the eIF-1A family.

Its function is as follows. Seems to be required for maximal rate of protein biosynthesis. Enhances ribosome dissociation into subunits and stabilizes the binding of the initiator Met-tRNA(I) to 40 S ribosomal subunits. In Methanococcus maripaludis (strain C6 / ATCC BAA-1332), this protein is Translation initiation factor 1A (eIF1A).